Reading from the N-terminus, the 1183-residue chain is DNA-directed RNA polymerase subunit beta (1183 aa).

It belongs to the RNA polymerase beta chain family. In terms of assembly, the RNAP catalytic core consists of 2 alpha, 1 beta, 1 beta' and 1 omega subunit. When a sigma factor is associated with the core the holoenzyme is formed, which can initiate transcription.

The enzyme catalyses RNA(n) + a ribonucleoside 5'-triphosphate = RNA(n+1) + diphosphate. DNA-dependent RNA polymerase catalyzes the transcription of DNA into RNA using the four ribonucleoside triphosphates as substrates. This Staphylococcus aureus (strain Mu50 / ATCC 700699) protein is DNA-directed RNA polymerase subunit beta.